The sequence spans 68 residues: MTMINSIINISLNKISKTHQINKFKNENNFYNNNLKCSDLDVDFRHQTIIGNIHLGNKGILAGIYYNI.

This is an uncharacterized protein from Dictyostelium discoideum (Social amoeba).